The sequence spans 117 residues: Large ribosomal subunit protein bL20 (117 aa).

Belongs to the bacterial ribosomal protein bL20 family.

In terms of biological role, binds directly to 23S ribosomal RNA and is necessary for the in vitro assembly process of the 50S ribosomal subunit. It is not involved in the protein synthesizing functions of that subunit. This is Large ribosomal subunit protein bL20 from Limosilactobacillus reuteri (strain DSM 20016) (Lactobacillus reuteri).